The chain runs to 240 residues: Uridylate kinase (240 aa).

Residue Lys-12–Gly-15 participates in ATP binding. An involved in allosteric activation by GTP region spans residues Gly-20–Gly-25. UMP is bound at residue Gly-54. Positions 55 and 59 each coordinate ATP. UMP contacts are provided by residues Asp-74 and Thr-135 to Thr-142. 3 residues coordinate ATP: Asn-163, Tyr-169, and Asp-172.

It belongs to the UMP kinase family. In terms of assembly, homohexamer.

Its subcellular location is the cytoplasm. The catalysed reaction is UMP + ATP = UDP + ADP. Its pathway is pyrimidine metabolism; CTP biosynthesis via de novo pathway; UDP from UMP (UMPK route): step 1/1. With respect to regulation, allosterically activated by GTP. Inhibited by UTP. Catalyzes the reversible phosphorylation of UMP to UDP. The chain is Uridylate kinase from Geobacillus kaustophilus (strain HTA426).